We begin with the raw amino-acid sequence, 153 residues long: Regulator of sigma D (153 aa).

The protein belongs to the Rsd/AlgQ family. Interacts with RpoD.

The protein resides in the cytoplasm. Functionally, binds RpoD and negatively regulates RpoD-mediated transcription activation by preventing the interaction between the primary sigma factor RpoD with the catalytic core of the RNA polymerase and with promoter DNA. May be involved in replacement of the RNA polymerase sigma subunit from RpoD to RpoS during the transition from exponential growth to the stationary phase. The sequence is that of Regulator of sigma D from Pectobacterium carotovorum subsp. carotovorum (strain PC1).